The following is a 333-amino-acid chain: Ribosomal RNA large subunit methyltransferase F (333 aa).

Positions 1–10 (MPQPPKRPRK) are enriched in basic residues. Positions 1 to 31 (MPQPPKRPRKPAPAAVKTAPAKGELHPRNRH) are disordered. Positions 12 to 22 (APAAVKTAPAK) are enriched in low complexity.

This sequence belongs to the methyltransferase superfamily. METTL16/RlmF family.

It localises to the cytoplasm. It catalyses the reaction adenosine(1618) in 23S rRNA + S-adenosyl-L-methionine = N(6)-methyladenosine(1618) in 23S rRNA + S-adenosyl-L-homocysteine + H(+). In terms of biological role, specifically methylates the adenine in position 1618 of 23S rRNA. This Ectopseudomonas mendocina (strain ymp) (Pseudomonas mendocina) protein is Ribosomal RNA large subunit methyltransferase F.